The sequence spans 546 residues: Chaperonin GroEL 1 (546 aa).

ATP contacts are provided by residues 30–33 (TLGP), Lys-51, 87–91 (DGTTT), Gly-415, 479–481 (NAA), and Asp-495. The segment at 526–546 (KEDAPMPGGMPGGMGGMGMDM) is disordered. A compositionally biased stretch (gly residues) spans 534-546 (GMPGGMGGMGMDM).

It belongs to the chaperonin (HSP60) family. As to quaternary structure, forms a cylinder of 14 subunits composed of two heptameric rings stacked back-to-back. Interacts with the co-chaperonin GroES.

It is found in the cytoplasm. It catalyses the reaction ATP + H2O + a folded polypeptide = ADP + phosphate + an unfolded polypeptide.. Functionally, together with its co-chaperonin GroES, plays an essential role in assisting protein folding. The GroEL-GroES system forms a nano-cage that allows encapsulation of the non-native substrate proteins and provides a physical environment optimized to promote and accelerate protein folding. In Burkholderia vietnamiensis (strain G4 / LMG 22486) (Burkholderia cepacia (strain R1808)), this protein is Chaperonin GroEL 1.